A 148-amino-acid chain; its full sequence is Large ribosomal subunit protein bL9 (148 aa).

This sequence belongs to the bacterial ribosomal protein bL9 family.

In terms of biological role, binds to the 23S rRNA. The polypeptide is Large ribosomal subunit protein bL9 (Coprothermobacter proteolyticus (strain ATCC 35245 / DSM 5265 / OCM 4 / BT)).